Reading from the N-terminus, the 468-residue chain is Argininosuccinate synthase (468 aa).

Residues 10 to 18 (AYSGGLDTS) and Ala-37 each bind ATP. L-citrulline-binding residues include Tyr-90 and Ser-95. Gly-120 contacts ATP. Thr-122, Asn-126, and Asp-127 together coordinate L-aspartate. An L-citrulline-binding site is contributed by Asn-126. Positions 130, 182, 191, 267, and 279 each coordinate L-citrulline. The segment covering 445–457 (PVAAKATAKPVKA) has biased composition (low complexity). Residues 445–468 (PVAAKATAKPVKAPVKKPIAKKKG) form a disordered region. Positions 458-468 (PVKKPIAKKKG) are enriched in basic residues.

The protein belongs to the argininosuccinate synthase family. Type 1 subfamily. In terms of assembly, homotetramer.

Its subcellular location is the cytoplasm. It carries out the reaction L-citrulline + L-aspartate + ATP = 2-(N(omega)-L-arginino)succinate + AMP + diphosphate + H(+). It functions in the pathway amino-acid biosynthesis; L-arginine biosynthesis; L-arginine from L-ornithine and carbamoyl phosphate: step 2/3. The chain is Argininosuccinate synthase from Dechloromonas aromatica (strain RCB).